A 207-amino-acid polypeptide reads, in one-letter code: Killer cell lectin-like receptor subfamily F member 2 (207 aa).

The Cytoplasmic portion of the chain corresponds to 1-30; the sequence is MENEDGYMTLSFKNRCKSKQKSKDFSLYPQ. Phosphotyrosine is present on Tyr-7. The helical; Signal-anchor for type II membrane protein transmembrane segment at 31–51 threads the bilayer; that stretch reads YYCLLLIFGCIVILIFIMTGI. At 52–207 the chain is on the extracellular side; the sequence is DLKFWHKKMD…ILTHNGTSGV (156 aa). Asn-67 carries an N-linked (GlcNAc...) asparagine glycan. 3 disulfide bridges follow: Cys-78/Cys-89, Cys-106/Cys-193, and Cys-172/Cys-185. Positions 85–194 constitute a C-type lectin domain; the sequence is NEGKCYWFST…CSSTFKGICQ (110 aa). Asn-202 carries an N-linked (GlcNAc...) asparagine glycan.

As to quaternary structure, homodimer; non-disulfide-linked. Interacts with CLEC2A. In terms of processing, N-glycosylated.

It localises to the cell membrane. C-type lectin-like receptor involved in natural killer cell mediated cytotoxicity and cytokine secretion in keratinocytes via its interaction with CLEC2A. Triggers degranulation in a SYK-dependent manner and stimulates SYK phosphotyrosinylation without recruiting SYK directly. The sequence is that of Killer cell lectin-like receptor subfamily F member 2 (KLRF2) from Homo sapiens (Human).